Here is a 262-residue protein sequence, read N- to C-terminus: MAVVASRCTGLLLPDLGASLAGFRRRRSTPASSLSFRPRRARRRLGSLSCIAPPDSAEPQTDEPAAKDDSTEDKAEASSASQDAGNPTFPNKDLSRRIALASTIGAVGLFAYQRLDFGGVSLKDLAANATPYEEALSNGKPTVVEFYADWCEVCRELAPDVYKVEQQYKDRVNFVMLNVDNTKWEQELDEFGVEGIPHFAFLDKEGNEEGNVVGRLPKQYFLDNVVALASGEPTVPHARVVGQFSSAESRKVHQVADPRSHG.

The transit peptide at methionine 1–proline 54 directs the protein to the chloroplast. The segment at serine 47–proline 90 is disordered. Positions proline 64 to glutamate 76 are enriched in basic and acidic residues. Residues serine 78–phenylalanine 89 are compositionally biased toward polar residues. A Thioredoxin domain is found at serine 78–serine 230. Catalysis depends on nucleophile residues cysteine 151 and cysteine 154. A disulfide bond links cysteine 151 and cysteine 154.

Belongs to the thioredoxin family.

The protein resides in the plastid. The protein localises to the chloroplast. Its function is as follows. Probable thiol-disulfide oxidoreductase that may participate in various redox reactions in the chloroplast. In Oryza sativa subsp. japonica (Rice), this protein is Thioredoxin-like protein HCF164, chloroplastic.